The chain runs to 330 residues: ADP-L-glycero-D-manno-heptose-6-epimerase (330 aa).

Residues 11–12 (FI), 32–33 (DN), K39, K54, 75–79 (EGACS), and N92 contribute to the NADP(+) site. The Proton acceptor role is filled by Y139. K143 lines the NADP(+) pocket. N168 is a binding site for substrate. Residues V169 and K177 each coordinate NADP(+). K177 functions as the Proton acceptor in the catalytic mechanism. Substrate contacts are provided by residues R179, H186, 200–203 (FGEY), R213, and Y292.

Belongs to the NAD(P)-dependent epimerase/dehydratase family. HldD subfamily. Homopentamer. NADP(+) is required as a cofactor.

The catalysed reaction is ADP-D-glycero-beta-D-manno-heptose = ADP-L-glycero-beta-D-manno-heptose. Its pathway is nucleotide-sugar biosynthesis; ADP-L-glycero-beta-D-manno-heptose biosynthesis; ADP-L-glycero-beta-D-manno-heptose from D-glycero-beta-D-manno-heptose 7-phosphate: step 4/4. Functionally, catalyzes the interconversion between ADP-D-glycero-beta-D-manno-heptose and ADP-L-glycero-beta-D-manno-heptose via an epimerization at carbon 6 of the heptose. The sequence is that of ADP-L-glycero-D-manno-heptose-6-epimerase from Burkholderia pseudomallei (strain 1026b).